The chain runs to 146 residues: Snaclec mamushigin subunit beta (146 aa).

The N-terminal stretch at 1-23 (MGRFIFLSFGLLVVFVSLSGTGA) is a signal peptide. 3 cysteine pairs are disulfide-bonded: cysteine 25–cysteine 36, cysteine 53–cysteine 142, and cysteine 119–cysteine 134. A C-type lectin domain is found at 32-143 (YEGHCYRVFQ…CSRTYNVVCK (112 aa)).

In terms of assembly, heterodimer of subunits alpha and beta; disulfide-linked. Expressed by the venom gland.

The protein resides in the secreted. Binds to platelet GPIbalpha (GP1BA) and enhances platelet aggregation at low-shear stress. At high-shear stress, blocks platelet aggregation in a dose-dependent manner. This is Snaclec mamushigin subunit beta from Gloydius blomhoffii (Mamushi).